The following is a 420-amino-acid chain: Gamma-glutamyl phosphate reductase (420 aa).

Belongs to the gamma-glutamyl phosphate reductase family.

It is found in the cytoplasm. The catalysed reaction is L-glutamate 5-semialdehyde + phosphate + NADP(+) = L-glutamyl 5-phosphate + NADPH + H(+). It functions in the pathway amino-acid biosynthesis; L-proline biosynthesis; L-glutamate 5-semialdehyde from L-glutamate: step 2/2. Catalyzes the NADPH-dependent reduction of L-glutamate 5-phosphate into L-glutamate 5-semialdehyde and phosphate. The product spontaneously undergoes cyclization to form 1-pyrroline-5-carboxylate. The polypeptide is Gamma-glutamyl phosphate reductase (Laribacter hongkongensis (strain HLHK9)).